The primary structure comprises 145 residues: 3-hydroxyacyl-[acyl-carrier-protein] dehydratase FabZ (145 aa).

The active site involves His48.

This sequence belongs to the thioester dehydratase family. FabZ subfamily.

The protein localises to the cytoplasm. The catalysed reaction is a (3R)-hydroxyacyl-[ACP] = a (2E)-enoyl-[ACP] + H2O. In terms of biological role, involved in unsaturated fatty acids biosynthesis. Catalyzes the dehydration of short chain beta-hydroxyacyl-ACPs and long chain saturated and unsaturated beta-hydroxyacyl-ACPs. The protein is 3-hydroxyacyl-[acyl-carrier-protein] dehydratase FabZ of Marinobacter nauticus (strain ATCC 700491 / DSM 11845 / VT8) (Marinobacter aquaeolei).